The primary structure comprises 440 residues: MSGFGGVKNVVVVGLGMTGLSVVKHLLKTTISLTIKVIDTRDTPPGHDQLPENVELHSGGWQQDWLINADLIVTNPGIALASPQLKPAIDKGIKIVGDIELFAWAVNAPVIAITGSNGKSTVTDLTGEMAKAAGVKTAVGGNIGFAALDLLEQDAELYVLELSSFQLETTSTLKLKAAAFLNLSEDHMDRYQGMADYRQAKLRIFEHAEVCIVNRDDKQTYPDVEKTLKSFGFDQGDYGCIEKDGIEYLAKNTVPLLAANELGLVGKHNIANSLVAIALLDAAGINLDATLDTLRTYNGLTHRCQVVADNNGIRWVNDSKATNVASTLAALSGLQLEGKLHLLVGGVGKGADFSELSPALHDLNLMMYCFGEDGDQFVSLDPRSLLCETMNEAIATLYPTLNKGDMVMLSPACASFDQYANFMARGDAFTQLAKQYSIES.

ATP is bound at residue 115–121 (GSNGKST).

Belongs to the MurCDEF family.

The protein localises to the cytoplasm. The catalysed reaction is UDP-N-acetyl-alpha-D-muramoyl-L-alanine + D-glutamate + ATP = UDP-N-acetyl-alpha-D-muramoyl-L-alanyl-D-glutamate + ADP + phosphate + H(+). Its pathway is cell wall biogenesis; peptidoglycan biosynthesis. Cell wall formation. Catalyzes the addition of glutamate to the nucleotide precursor UDP-N-acetylmuramoyl-L-alanine (UMA). The sequence is that of UDP-N-acetylmuramoylalanine--D-glutamate ligase from Aliivibrio fischeri (strain ATCC 700601 / ES114) (Vibrio fischeri).